The primary structure comprises 117 residues: Resistin-like gamma (117 aa).

A signal peptide spans 1 to 29 (MLTFNKMKTTTCSLLICISLLQLMVPVNT). Cystine bridges form between cysteine 61-cysteine 114, cysteine 73-cysteine 113, cysteine 82-cysteine 99, cysteine 84-cysteine 101, and cysteine 88-cysteine 103.

The protein belongs to the resistin/FIZZ family. Homodimer. Heterodimer with RETNLB. In terms of tissue distribution, expressed in colon, lung, spleen, pancreas, ileum and bone marrow (at protein level). In colon, found throughout the crypt and surface epithelium, including goblet cells (at protein level). Highest expression is observed in bone marrow, spleen and lung, with lower levels in other tissues. Detected at low levels in granulocytes, but not found in monocytes or lymphocytes. Has very weak expression in white adipose tissue.

Its subcellular location is the secreted. Its function is as follows. Probable hormone. Promotes chemotaxis in myeloid cells. The polypeptide is Resistin-like gamma (Mus musculus (Mouse)).